A 454-amino-acid chain; its full sequence is Inactive tetrahydroanabasine acetyltransferase pauper allele (454 aa).

Belongs to the plant acyltransferase family. Monomer.

This is Inactive tetrahydroanabasine acetyltransferase pauper allele from Lupinus albus (White lupine).